The following is a 300-amino-acid chain: 2-keto-3-deoxy-L-fuconate dehydrogenase (300 aa).

NAD(+) is bound by residues 63 to 90 and aspartate 112; that span reads LITA…IATD. Position 198 (arginine 198) interacts with substrate. Tyrosine 201 (proton acceptor) is an active-site residue. NAD(+)-binding positions include lysine 205 and 234-238; that span reads IKTPS. Positions 242 and 260 each coordinate substrate.

The protein belongs to the short-chain dehydrogenases/reductases (SDR) family.

Functionally, plays a role in the catabolism of L-fucose. Catalyzes the NAD(+)-dependent oxidation of 2-keo-3-deoxy-L-fuconate to 2,4-diketo-3-deoxy-L-fuconate. The polypeptide is 2-keto-3-deoxy-L-fuconate dehydrogenase (Xanthomonas campestris pv. campestris (strain ATCC 33913 / DSM 3586 / NCPPB 528 / LMG 568 / P 25)).